The chain runs to 179 residues: Large ribosomal subunit protein uL10 (179 aa).

Belongs to the universal ribosomal protein uL10 family. In terms of assembly, part of the ribosomal stalk of the 50S ribosomal subunit. The N-terminus interacts with L11 and the large rRNA to form the base of the stalk. The C-terminus forms an elongated spine to which L12 dimers bind in a sequential fashion forming a multimeric L10(L12)X complex.

Forms part of the ribosomal stalk, playing a central role in the interaction of the ribosome with GTP-bound translation factors. The protein is Large ribosomal subunit protein uL10 of Symbiobacterium thermophilum (strain DSM 24528 / JCM 14929 / IAM 14863 / T).